The following is a 956-amino-acid chain: Ubiquitin carboxyl-terminal hydrolase CYLD (956 aa).

The interaction with TRIP stretch occupies residues 106-593 (CEERFSLFKN…LEIMIGKKKG (488 aa)). 2 CAP-Gly domains span residues 153 to 198 (LAER…VFVA) and 253 to 286 (DVLP…VQLC). Residues 309–353 (SVTQERRPPKLAFMSRGVGDKGSSSHNKPKATGSTSDPGNRNRSE) form a disordered region. Residues 330 to 349 (GSSSHNKPKATGSTSDPGNR) are compositionally biased toward polar residues. Residue Ser-387 is modified to Phosphoserine. The tract at residues 392–411 (STDFDRSSPPLQPPPVNSLS) is disordered. The segment at 394–469 (DFDRSSPPLQ…LAMPPGNSHG (76 aa)) is interaction with TRAF2. A phosphoserine mark is found at Ser-418 and Ser-422. An interaction with IKBKG/NEMO region spans residues 470–684 (LEVGSLAEVK…FTSEEKDPEE (215 aa)). The CAP-Gly 3 domain occupies 492 to 535 (GQPPGLNEVLAGLELEDECAGCTDGTFRGTRYFTCALKKALFVK). One can recognise a USP domain in the interval 592–950 (KGIQGHYNSC…DAYMCMYQSP (359 aa)). The active-site Nucleophile is Cys-601. The tract at residues 781–833 (LEDTPRQCRICGGLAMYECRECYDDPDISAGKIKQFCKTCNTQVHLHPKRLNH) is B-box. Positions 788, 791, 799, 802, 817, 820, 825, and 833 each coordinate Zn(2+). His-871 acts as the Proton acceptor in catalysis.

It belongs to the peptidase C19 family. As to quaternary structure, interacts (via CAP-Gly domain) with IKBKG/NEMO (via proline-rich C-terminal region). Interacts with TRAF2 and TRIP. Interacts with PLK1, DVL1, DVL3, MAVS, TBK1, IKKE and RIGI. Interacts (via CAP-Gly domain) with microtubules. Interacts with HDAC6 and BCL3. Interacts with MAP3K7. Identified in a complex with TRAF6 and SQSTM1. Interacts with OPTN and SQSTM1. Interacts with CEP350. Interacts with RNF31; the interaction is indirect and is mediated via SPATA2. Interacts with SPATA2 (via the PUB domain); the interaction is direct and recruits CYLD to the LUBAC complex, thereby regulating TNF-alpha-induced necroptosis. Phosphorylated on several serine residues by IKKA and/or IKKB in response to immune stimuli. Phosphorylation requires IKBKG. Phosphorylation abolishes TRAF2 deubiquitination, interferes with the activation of Jun kinases, and strongly reduces CD40-dependent gene activation by NF-kappa-B. In terms of processing, ubiquitinated. Polyubiquitinated in hepatocytes treated with palmitic acid. Ubiquitination is mediated by E3 ligase TRIM47 and leads to proteasomal degradation.

It is found in the cytoplasm. The protein localises to the perinuclear region. Its subcellular location is the cytoskeleton. It localises to the cell membrane. The protein resides in the microtubule organizing center. It is found in the centrosome. The protein localises to the spindle. Its subcellular location is the cilium basal body. The enzyme catalyses Thiol-dependent hydrolysis of ester, thioester, amide, peptide and isopeptide bonds formed by the C-terminal Gly of ubiquitin (a 76-residue protein attached to proteins as an intracellular targeting signal).. Its function is as follows. Deubiquitinase that specifically cleaves 'Lys-63'- and linear 'Met-1'-linked polyubiquitin chains and is involved in NF-kappa-B activation and TNF-alpha-induced necroptosis. Negatively regulates NF-kappa-B activation by deubiquitinating upstream signaling factors. Contributes to the regulation of cell survival, proliferation and differentiation via its effects on NF-kappa-B activation. Negative regulator of Wnt signaling. Inhibits HDAC6 and thereby promotes acetylation of alpha-tubulin and stabilization of microtubules. Plays a role in the regulation of microtubule dynamics, and thereby contributes to the regulation of cell proliferation, cell polarization, cell migration, and angiogenesis. Required for normal cell cycle progress and normal cytokinesis. Inhibits nuclear translocation of NF-kappa-B. Plays a role in the regulation of inflammation and the innate immune response, via its effects on NF-kappa-B activation. Dispensable for the maturation of intrathymic natural killer cells, but required for the continued survival of immature natural killer cells. Negatively regulates TNFRSF11A signaling and osteoclastogenesis. Involved in the regulation of ciliogenesis, allowing ciliary basal bodies to migrate and dock to the plasma membrane; this process does not depend on NF-kappa-B activation. Ability to remove linear ('Met-1'-linked) polyubiquitin chains regulates innate immunity and TNF-alpha-induced necroptosis: recruited to the LUBAC complex via interaction with SPATA2 and restricts linear polyubiquitin formation on target proteins. Regulates innate immunity by restricting linear polyubiquitin formation on RIPK2 in response to NOD2 stimulation. Involved in TNF-alpha-induced necroptosis by removing linear ('Met-1'-linked) polyubiquitin chains from RIPK1, thereby regulating the kinase activity of RIPK1. Negatively regulates intestinal inflammation by removing 'Lys-63' linked polyubiquitin chain of NLRP6, thereby reducing the interaction between NLRP6 and PYCARD/ASC and formation of the NLRP6 inflammasome. Does not catalyze deubiquitination of heterotypic 'Lys-63'-/'Lys-48'-linked branched ubiquitin chains. Removes 'Lys-63' linked polyubiquitin chain of MAP3K7, which inhibits phosphorylation and blocks downstream activation of the JNK-p38 kinase cascades. Also removes 'Lys-63'-linked polyubiquitin chains of MAP3K1 and MA3P3K3, which inhibit their interaction with MAP2K1 and MAP2K2. The sequence is that of Ubiquitin carboxyl-terminal hydrolase CYLD (CYLD) from Pongo abelii (Sumatran orangutan).